Reading from the N-terminus, the 227-residue chain is UPF0173 metal-dependent hydrolase BPUM_2573 (227 aa).

The protein belongs to the UPF0173 family.

This Bacillus pumilus (strain SAFR-032) protein is UPF0173 metal-dependent hydrolase BPUM_2573.